Consider the following 733-residue polypeptide: MRWTLMLQLLQLLLQLLMAQSQSLERISQDRIPLFRLTQQGDWDSLDRHPTDSLCVGLPAAGVTTLNLANRSLESLPSCLPRTLRSLDGSHNLLRALSEPVLGRLPELRVLTLHHNRISVLHWGRDTLAELRELDLSHNLLTELPPCAGPSGSSLRSLALAGNPLRALLPRTFACFPALRLLNLSCSELGHIAQEAFAGVDGGPLAALELLDLSGTSLERVESGWIRNLPKLKSLFLRKMPRLKTLEGDIFKMTPNLRQLDCGDSPALTSVHTEIFQDTPNLQVLQFQNCNLSSFGPWNSSQVLSVSLFGNPLICSCELAWLLVDVNKTVLHRAADTMCEPALGSTGPFSGPLSLSHLSNVCRSDQSTTLLPSNPGRFDHSVFAPRIQGPSIEQSTALSAQPGGSQQNITKVPSLTMTSPTQGSWMYKDASEETAQSTNSELVYSPSRALPGAASSGAEQTATHILEPNISSASTPLVSKYLEPLPTSPNPRSLPQTKQRTQATPRALHTDPPQDEIPVLLLDDDSEEEETRDQVAAPPQDVSCEYHPCKHLQTPCAELQRRFRCRCPGLSGEDTTPDPPTLQGVSEVTDTSVLVHWCAPNSVVLWYQIHYVAEGRSGNQSVVDIYATARQHPLYKLTPGTTYHVCVLAANRAGLSQSQTSGWRRSCATFTTKPSSVVIFWGLCTASGLLLVSTLVLSVCLWRQRWKPHRQFYDTHLVAFKNPARAEEVTQWE.

Residues Met1 to Ala19 form the signal peptide. Residues Gln20–Ser676 are Extracellular-facing. LRR repeat units follow at residues Gly62–Arg82, Thr83–Pro106, Glu107–Leu128, Glu130–Ser151, Ser154–Cys175, Ala178–Gly199, Ala207–Pro230, Lys231–Met253, Asn256–Asp278, and Asn281–Gln302. Asn70 is a glycosylation site (N-linked (GlcNAc...) asparagine). Residue Asn183 is glycosylated (N-linked (GlcNAc...) asparagine). N-linked (GlcNAc...) asparagine glycans are attached at residues Asn291, Asn299, Asn327, Asn408, and Asn469. In terms of domain architecture, LRRCT spans Asn311 to Ser364. The tract at residues Ser395–Gly423 is disordered. The tract at residues Lys480–Pro518 is disordered. A compositionally biased stretch (polar residues) spans Asn490–Thr504. The 100-residue stretch at Thr576–Ser675 folds into the Fibronectin type-III domain. Residue Asn619 is glycosylated (N-linked (GlcNAc...) asparagine). The chain crosses the membrane as a helical span at residues Val677 to Leu697. Topologically, residues Ser698–Glu733 are cytoplasmic.

The protein resides in the membrane. In terms of biological role, may play an important role in hippocampus-dependent long-lasting memory. The chain is Leucine-rich repeat neuronal protein 4 (Lrrn4) from Mus musculus (Mouse).